Consider the following 177-residue polypeptide: Inner membrane-spanning protein YciB (177 aa).

The next 5 helical transmembrane spans lie at 22–42, 50–70, 76–96, 121–141, and 149–169; these read IFIASGSLIVISGLICIIHWI, ISLFSFLSVFFFGSLTIFFHN, WKITIIYIIFSLVLLISQFFT, FIWSLFFLFCAILNIYIAYYF, and FKVFGFTSLTFFLILITSIYI.

This sequence belongs to the YciB family.

Its subcellular location is the cell inner membrane. In terms of biological role, plays a role in cell envelope biogenesis, maintenance of cell envelope integrity and membrane homeostasis. The polypeptide is Inner membrane-spanning protein YciB (Buchnera aphidicola subsp. Acyrthosiphon pisum (strain APS) (Acyrthosiphon pisum symbiotic bacterium)).